The following is a 243-amino-acid chain: Aliphatic sulfonates import ATP-binding protein SsuB (243 aa).

An ABC transporter domain is found at 11-230 (ATVRGLRKSY…RTHPSFASYT (220 aa)). ATP is bound at residue 43-50 (GRSGSGKS).

This sequence belongs to the ABC transporter superfamily. Aliphatic sulfonates importer (TC 3.A.1.17.2) family. The complex is composed of two ATP-binding proteins (SsuB), two transmembrane proteins (SsuC) and a solute-binding protein (SsuA).

The protein localises to the cell membrane. It catalyses the reaction ATP + H2O + aliphatic sulfonate-[sulfonate-binding protein]Side 1 = ADP + phosphate + aliphatic sulfonateSide 2 + [sulfonate-binding protein]Side 1.. Part of the ABC transporter complex SsuABC involved in aliphatic sulfonates import. Responsible for energy coupling to the transport system. Is also involved in taurine transport. Seems to not be involved in long chain aliphatic sulfonates transport (chain length of eight carbon atoms or more). In Corynebacterium glutamicum (strain ATCC 13032 / DSM 20300 / JCM 1318 / BCRC 11384 / CCUG 27702 / LMG 3730 / NBRC 12168 / NCIMB 10025 / NRRL B-2784 / 534), this protein is Aliphatic sulfonates import ATP-binding protein SsuB.